The chain runs to 932 residues: Transcriptional regulatory protein DagR (932 aa).

A Sigma-54 factor interaction domain is found at 111–343 (LIGYDRSLRD…LKSDIQFLCA (233 aa)). Residues 141-148 (GPSGVGKT) and 210-219 (ADGGYLLLDE) each bind ATP. Positions 462–567 (RYGDQIEERV…KECRHYRQRI (106 aa)) constitute a PRD 1 domain. His-497 carries the post-translational modification Phosphohistidine. In terms of domain architecture, PTS EIIA type-4 spans 572 to 708 (DCGVILIAHG…PQQENGGKVL (137 aa)). His-580 acts as the Tele-phosphohistidine intermediate in catalysis. The 98-residue stretch at 835–932 (LNPQRILKEM…YFYIYELLYS (98 aa)) folds into the PRD 2 domain. Residue His-870 is modified to Phosphohistidine.

Involved in the regulation of the catabolism of D-glucosaminate. The polypeptide is Transcriptional regulatory protein DagR (dgaR) (Salmonella typhimurium (strain 14028s / SGSC 2262)).